A 106-amino-acid polypeptide reads, in one-letter code: Thioredoxin-like protein YdbP (106 aa).

The Thioredoxin domain maps to Met1–Ser106. Cys29 and Cys32 are oxidised to a cystine.

The protein belongs to the thioredoxin family.

Participates in various redox reactions through the reversible oxidation of its active center dithiol to a disulfide and catalyzes dithiol-disulfide exchange reactions. In Bacillus subtilis (strain 168), this protein is Thioredoxin-like protein YdbP (ydbP).